The chain runs to 357 residues: Cytochrome c peroxidase, mitochondrial (357 aa).

Residues 1–23 constitute a mitochondrion transit peptide; sequence MSATALRIAPIASRTFQRRLGYL. His-116 acts as the Proton acceptor in catalysis. The segment at 189 to 212 is disordered; the sequence is PWRSGRTDLPEDMTPDNGRLPDGD. Position 239 (His-239) interacts with heme b. Trp-255 acts as the Tryptophan radical intermediate in catalysis.

Belongs to the peroxidase family. Cytochrome c peroxidase subfamily. In terms of assembly, forms a one-to-one complex with cytochrome c. It depends on heme b as a cofactor.

The protein localises to the mitochondrion matrix. It is found in the mitochondrion intermembrane space. It catalyses the reaction 2 Fe(II)-[cytochrome c] + H2O2 + 2 H(+) = 2 Fe(III)-[cytochrome c] + 2 H2O. Functionally, destroys radicals which are normally produced within the cells and which are toxic to biological systems. The chain is Cytochrome c peroxidase, mitochondrial from Candida glabrata (strain ATCC 2001 / BCRC 20586 / JCM 3761 / NBRC 0622 / NRRL Y-65 / CBS 138) (Yeast).